The primary structure comprises 285 residues: Aspartate/glutamate leucyltransferase (285 aa).

The protein belongs to the R-transferase family. Bpt subfamily.

The protein resides in the cytoplasm. It catalyses the reaction N-terminal L-glutamyl-[protein] + L-leucyl-tRNA(Leu) = N-terminal L-leucyl-L-glutamyl-[protein] + tRNA(Leu) + H(+). The enzyme catalyses N-terminal L-aspartyl-[protein] + L-leucyl-tRNA(Leu) = N-terminal L-leucyl-L-aspartyl-[protein] + tRNA(Leu) + H(+). Its function is as follows. Functions in the N-end rule pathway of protein degradation where it conjugates Leu from its aminoacyl-tRNA to the N-termini of proteins containing an N-terminal aspartate or glutamate. This Dinoroseobacter shibae (strain DSM 16493 / NCIMB 14021 / DFL 12) protein is Aspartate/glutamate leucyltransferase.